A 212-amino-acid polypeptide reads, in one-letter code: Dephospho-CoA kinase (212 aa).

The DPCK domain maps to 6 to 211 (RLGLTGGIGS…LSCQPLSPNQ (206 aa)). Residue 14 to 19 (GSGKST) participates in ATP binding.

The protein belongs to the CoaE family.

Its subcellular location is the cytoplasm. The enzyme catalyses 3'-dephospho-CoA + ATP = ADP + CoA + H(+). Its pathway is cofactor biosynthesis; coenzyme A biosynthesis; CoA from (R)-pantothenate: step 5/5. Its function is as follows. Catalyzes the phosphorylation of the 3'-hydroxyl group of dephosphocoenzyme A to form coenzyme A. This is Dephospho-CoA kinase from Albidiferax ferrireducens (strain ATCC BAA-621 / DSM 15236 / T118) (Rhodoferax ferrireducens).